The chain runs to 297 residues: tRNA uridine(34) hydroxylase (297 aa).

Residues 133–228 form the Rhodanese domain; that stretch reads SGDEVVFFDG…YGETFKDQGL (96 aa). Cys188 functions as the Cysteine persulfide intermediate in the catalytic mechanism.

It belongs to the TrhO family.

It carries out the reaction uridine(34) in tRNA + AH2 + O2 = 5-hydroxyuridine(34) in tRNA + A + H2O. Functionally, catalyzes oxygen-dependent 5-hydroxyuridine (ho5U) modification at position 34 in tRNAs. This Pseudarthrobacter chlorophenolicus (strain ATCC 700700 / DSM 12829 / CIP 107037 / JCM 12360 / KCTC 9906 / NCIMB 13794 / A6) (Arthrobacter chlorophenolicus) protein is tRNA uridine(34) hydroxylase.